A 192-amino-acid polypeptide reads, in one-letter code: Probable thymidylate kinase (192 aa).

Position 8 to 15 (8 to 15 (GIDGSGKS)) interacts with ATP.

The protein belongs to the thymidylate kinase family.

The enzyme catalyses dTMP + ATP = dTDP + ADP. The chain is Probable thymidylate kinase from Pyrobaculum aerophilum (strain ATCC 51768 / DSM 7523 / JCM 9630 / CIP 104966 / NBRC 100827 / IM2).